A 231-amino-acid chain; its full sequence is eRF1 methyltransferase catalytic subunit mtq2 (231 aa).

Residues Gly54–Gly58, Asp80, and Asn130 contribute to the S-adenosyl-L-methionine site. Asn130–Tyr133 provides a ligand contact to substrate.

This sequence belongs to the eukaryotic/archaeal PrmC-related family. As to quaternary structure, heterodimer of mtq2-trm112. mtq2 is the catalytic subunit carrying the catalytic and the S-adenosyl L-methionine binding sites.

It is found in the cytoplasm. The protein localises to the nucleus. It carries out the reaction L-glutaminyl-[peptide chain release factor] + S-adenosyl-L-methionine = N(5)-methyl-L-glutaminyl-[peptide chain release factor] + S-adenosyl-L-homocysteine + H(+). In terms of biological role, methylates eRF1 on 'Gln-182' using S-adenosyl L-methionine as methyl donor. eRF1 needs to be complexed to eRF3 in its GTP-bound form to be efficiently methylated. The protein is eRF1 methyltransferase catalytic subunit mtq2 (mtq2) of Schizosaccharomyces pombe (strain 972 / ATCC 24843) (Fission yeast).